The following is a 745-amino-acid chain: Photosystem I P700 chlorophyll a apoprotein A2 (745 aa).

Transmembrane regions (helical) follow at residues 49–72, 138–161, 178–202, 276–294, 338–361, 377–403, 425–447, and 528–546; these read LFAT…FHIA, LYAG…LHLQ, LNHH…HVAI, MAHH…GHMY, LHFQ…QHMY, AALY…IFLV, AIIS…LYVH, and FLVH…LILV. Residues cysteine 570 and cysteine 579 each coordinate [4Fe-4S] cluster. 2 consecutive transmembrane segments (helical) span residues 586–607 and 654–676; these read AFYL…YWHW and LAVW…MFLI. Positions 665, 673, and 681 each coordinate chlorophyll a. Tryptophan 682 lines the phylloquinone pocket. The helical transmembrane segment at 718 to 738 threads the bilayer; that stretch reads LVGLAHFTVGYVLTYAAFVIA.

The protein belongs to the PsaA/PsaB family. The PsaA/B heterodimer binds the P700 chlorophyll special pair and subsequent electron acceptors. PSI consists of a core antenna complex that captures photons, and an electron transfer chain that converts photonic excitation into a charge separation. The cyanobacterial PSI reaction center is composed of one copy each of PsaA,B,C,D,E,F,I,J,K,L,M and X, and forms trimeric complexes. PSI electron transfer chain: 5 chlorophyll a, 1 chlorophyll a', 2 phylloquinones and 3 4Fe-4S clusters. PSI core antenna: 90 chlorophyll a, 22 carotenoids, 3 phospholipids and 1 galactolipid. P700 is a chlorophyll a/chlorophyll a' dimer, A0 is one or more chlorophyll a, A1 is one or both phylloquinones and FX is a shared 4Fe-4S iron-sulfur center. is required as a cofactor.

The protein localises to the cellular thylakoid membrane. It catalyses the reaction reduced [plastocyanin] + hnu + oxidized [2Fe-2S]-[ferredoxin] = oxidized [plastocyanin] + reduced [2Fe-2S]-[ferredoxin]. PsaA and PsaB bind P700, the primary electron donor of photosystem I (PSI), as well as the electron acceptors A0, A1 and FX. PSI is a plastocyanin/cytochrome c6-ferredoxin oxidoreductase, converting photonic excitation into a charge separation, which transfers an electron from the donor P700 chlorophyll pair to the spectroscopically characterized acceptors A0, A1, FX, FA and FB in turn. Oxidized P700 is reduced on the lumenal side of the thylakoid membrane by plastocyanin or cytochrome c6. The protein is Photosystem I P700 chlorophyll a apoprotein A2 of Synechococcus sp. (strain JA-3-3Ab) (Cyanobacteria bacterium Yellowstone A-Prime).